Reading from the N-terminus, the 92-residue chain is Large ribosomal subunit protein uL23c (92 aa).

Belongs to the universal ribosomal protein uL23 family. In terms of assembly, part of the 50S ribosomal subunit.

The protein resides in the plastid. The protein localises to the chloroplast. In terms of biological role, binds to 23S rRNA. The sequence is that of Large ribosomal subunit protein uL23c (rpl23) from Mesostigma viride (Green alga).